We begin with the raw amino-acid sequence, 542 residues long: MARYVFITGGVVSSLGKGIAAAALGALLQARGYRVRLRKLDPYLNVDPGTMSPTQHGEVFVTDDGAETDLDLGHYERFTGRSATKTDNITTGRIYKNIIDKERRGDYLGATVQVIPHVTNEIKNFVTEGNEDYDFVICEIGGTVGDIEAMPFMEAIRQLGNDLPRGTAVYVHLTLMPYIPAAGELKTKPTQHSVKELQALGIHPDILLVRADREIPEAERRKLSLFCNVRQSAVIQALDVASIYDVPIAYHKEGLDNEVLAAFGIEPAPKPRMEAWEDVAHRIRTPEGEVTIAIVGKYTGLKDAYKSLIEALYHGGIANRVKVKLEWIESEVFEKEDPAPYLEKVHGILVPGGFGERGSEGKINAARFARERKVPYFGICFGMQMAVVEAARNLAGIEKASSTEFGPTKEPVVGLMTEWVKGNELEKRSAAGDLGGTMRLGAYRAALKPETKIAGIYGSPDISERHRHRYEVNVDYKDRLESCGLVFSGMSPDGVLPETVEYPDHPWFIGVQYHPELKSRPLDPHPLFASFIEAALEQSRLV.

An amidoligase domain region spans residues 1 to 265 (MARYVFITGG…DNEVLAAFGI (265 aa)). Ser-13 is a binding site for CTP. UTP is bound at residue Ser-13. Residues 14–19 (SLGKGI) and Asp-71 each bind ATP. Residues Asp-71 and Glu-139 each contribute to the Mg(2+) site. Residues 146–148 (DIE), 186–191 (KTKPTQ), and Lys-222 contribute to the CTP site. Residues 186–191 (KTKPTQ) and Lys-222 each bind UTP. The region spanning 291-541 (TIAIVGKYTG…IEAALEQSRL (251 aa)) is the Glutamine amidotransferase type-1 domain. Gly-353 contacts L-glutamine. Catalysis depends on Cys-380, which acts as the Nucleophile; for glutamine hydrolysis. L-glutamine-binding positions include 381–384 (FGMQ), Glu-404, and Arg-469. Residues His-514 and Glu-516 contribute to the active site.

This sequence belongs to the CTP synthase family. Homotetramer.

The enzyme catalyses UTP + L-glutamine + ATP + H2O = CTP + L-glutamate + ADP + phosphate + 2 H(+). The catalysed reaction is L-glutamine + H2O = L-glutamate + NH4(+). It catalyses the reaction UTP + NH4(+) + ATP = CTP + ADP + phosphate + 2 H(+). Its pathway is pyrimidine metabolism; CTP biosynthesis via de novo pathway; CTP from UDP: step 2/2. With respect to regulation, allosterically activated by GTP, when glutamine is the substrate; GTP has no effect on the reaction when ammonia is the substrate. The allosteric effector GTP functions by stabilizing the protein conformation that binds the tetrahedral intermediate(s) formed during glutamine hydrolysis. Inhibited by the product CTP, via allosteric rather than competitive inhibition. Its function is as follows. Catalyzes the ATP-dependent amination of UTP to CTP with either L-glutamine or ammonia as the source of nitrogen. Regulates intracellular CTP levels through interactions with the four ribonucleotide triphosphates. The protein is CTP synthase of Sinorhizobium medicae (strain WSM419) (Ensifer medicae).